We begin with the raw amino-acid sequence, 144 residues long: RNA-binding protein 1 (144 aa).

One can recognise an RRM domain in the interval C11–G84. Residues R78–S115 are disordered.

Belongs to the splicing factor SR family. In terms of assembly, interacts with x16 (via Arg/Ser-rich region). Post-translationally, extensively phosphorylated on serine residues in the RS domain. In terms of processing, the tandem heptapeptide repeats in the C-terminal domain (CTD) can be highly phosphorylated. The phosphorylation activates Pol II. Phosphorylation occurs at residues 'Ser-2', 'Ser-5' and 'Ser-7' of the heptapeptide repeat and is mediated by P-TEFb. Dephosphorylated by the INTAC complex when transcripts are unfavorably configured for transcriptional elongation, leading to premature transcription termination: dephosphorylation is mediated by the mts/PP2A component of the INTAC complex. As to expression, ubiquitous.

It is found in the nucleus. In terms of biological role, contributes to the activation of female-specific DSX splicing in vivo by recognizing the RBP1 target sequences within the purine-rich polypyrimidine tract of the female-specific 3' splice site. The sequence is that of RNA-binding protein 1 (Rbp1) from Drosophila melanogaster (Fruit fly).